Here is a 360-residue protein sequence, read N- to C-terminus: Holliday junction branch migration complex subunit RuvB (360 aa).

Residues 1-46 are disordered; sequence MAIKRSGNSDRPAKNPSSTPGTNAPTLLSPTPTHQEKETSEEKIRP. The large ATPase domain (RuvB-L) stretch occupies residues 13–205; that stretch reads AKNPSSTPGT…FGLIQRLRFY (193 aa). The segment covering 15–33 has biased composition (polar residues); sequence NPSSTPGTNAPTLLSPTPT. The segment covering 34–46 has biased composition (basic and acidic residues); sequence HQEKETSEEKIRP. ATP-binding positions include I44, R45, G86, K89, T90, T91, 152–154, R195, Y205, and R242; that span reads EDY. Position 90 (T90) interacts with Mg(2+). Residues 206–276 are small ATPAse domain (RuvB-S); sequence EVDELTLIVL…LASEALDIYQ (71 aa). Residues 279-360 are head domain (RuvB-H); that stretch reads KQGLDWIDRL…LTSEEQLSIF (82 aa). Residues R334 and R339 each contribute to the DNA site.

This sequence belongs to the RuvB family. As to quaternary structure, homohexamer. Forms an RuvA(8)-RuvB(12)-Holliday junction (HJ) complex. HJ DNA is sandwiched between 2 RuvA tetramers; dsDNA enters through RuvA and exits via RuvB. An RuvB hexamer assembles on each DNA strand where it exits the tetramer. Each RuvB hexamer is contacted by two RuvA subunits (via domain III) on 2 adjacent RuvB subunits; this complex drives branch migration. In the full resolvosome a probable DNA-RuvA(4)-RuvB(12)-RuvC(2) complex forms which resolves the HJ.

The protein resides in the cytoplasm. The catalysed reaction is ATP + H2O = ADP + phosphate + H(+). In terms of biological role, the RuvA-RuvB-RuvC complex processes Holliday junction (HJ) DNA during genetic recombination and DNA repair, while the RuvA-RuvB complex plays an important role in the rescue of blocked DNA replication forks via replication fork reversal (RFR). RuvA specifically binds to HJ cruciform DNA, conferring on it an open structure. The RuvB hexamer acts as an ATP-dependent pump, pulling dsDNA into and through the RuvAB complex. RuvB forms 2 homohexamers on either side of HJ DNA bound by 1 or 2 RuvA tetramers; 4 subunits per hexamer contact DNA at a time. Coordinated motions by a converter formed by DNA-disengaged RuvB subunits stimulates ATP hydrolysis and nucleotide exchange. Immobilization of the converter enables RuvB to convert the ATP-contained energy into a lever motion, pulling 2 nucleotides of DNA out of the RuvA tetramer per ATP hydrolyzed, thus driving DNA branch migration. The RuvB motors rotate together with the DNA substrate, which together with the progressing nucleotide cycle form the mechanistic basis for DNA recombination by continuous HJ branch migration. Branch migration allows RuvC to scan DNA until it finds its consensus sequence, where it cleaves and resolves cruciform DNA. The polypeptide is Holliday junction branch migration complex subunit RuvB (Rippkaea orientalis (strain PCC 8801 / RF-1) (Cyanothece sp. (strain PCC 8801))).